The following is a 445-amino-acid chain: Phosphoglucosamine mutase (445 aa).

Residue S102 is the Phosphoserine intermediate of the active site. Residues S102, D241, D243, and D245 each coordinate Mg(2+). S102 carries the post-translational modification Phosphoserine.

This sequence belongs to the phosphohexose mutase family. Requires Mg(2+) as cofactor. In terms of processing, activated by phosphorylation.

The enzyme catalyses alpha-D-glucosamine 1-phosphate = D-glucosamine 6-phosphate. Catalyzes the conversion of glucosamine-6-phosphate to glucosamine-1-phosphate. The polypeptide is Phosphoglucosamine mutase (Shewanella baltica (strain OS155 / ATCC BAA-1091)).